Reading from the N-terminus, the 416-residue chain is Gamma-glutamyl phosphate reductase (416 aa).

It belongs to the gamma-glutamyl phosphate reductase family.

The protein resides in the cytoplasm. The catalysed reaction is L-glutamate 5-semialdehyde + phosphate + NADP(+) = L-glutamyl 5-phosphate + NADPH + H(+). The protein operates within amino-acid biosynthesis; L-proline biosynthesis; L-glutamate 5-semialdehyde from L-glutamate: step 2/2. In terms of biological role, catalyzes the NADPH-dependent reduction of L-glutamate 5-phosphate into L-glutamate 5-semialdehyde and phosphate. The product spontaneously undergoes cyclization to form 1-pyrroline-5-carboxylate. This Salmonella paratyphi C (strain RKS4594) protein is Gamma-glutamyl phosphate reductase.